Here is a 503-residue protein sequence, read N- to C-terminus: Maturase K (503 aa).

The protein belongs to the intron maturase 2 family. MatK subfamily.

The protein localises to the plastid. The protein resides in the chloroplast. Functionally, usually encoded in the trnK tRNA gene intron. Probably assists in splicing its own and other chloroplast group II introns. In Syzygium anisatum (Aniseed myrtle), this protein is Maturase K.